The primary structure comprises 192 residues: Visinin (192 aa).

Residue G2 is the site of N-myristoyl glycine attachment. 4 EF-hand domains span residues 24 to 59 (TEEE…FFPN), 61 to 96 (EPQG…TSSG), 97 to 132 (KTHL…IFKM), and 146 to 181 (NSPQ…KNDA). Ca(2+) contacts are provided by D74, N76, D78, T80, E85, D110, D112, N114, E116, E121, N164, K166, and E171.

It belongs to the recoverin family. In terms of tissue distribution, retinal cell specific protein.

Functionally, seems to be implicated in the pathway from retinal rod guanylate cyclase to rhodopsin. May be involved in the blocking of the phosphorylation of rhodopsin. The sequence is that of Visinin from Gallus gallus (Chicken).